The sequence spans 331 residues: NmrA-like family domain-containing oxidoreductase himF (331 aa).

NADP(+) is bound by residues 8 to 13 (GATGNQ), 34 to 38 (RNAES), 55 to 56 (DG), 76 to 78 (TNG), K133, and 155 to 167 (WFFE…QMAA).

The protein belongs to the NmrA-type oxidoreductase family.

The protein operates within secondary metabolite biosynthesis. Its function is as follows. NmrA-like family domain-containing oxidoreductase; part of the him gene cluster that mediates the biosynthesis of himeic acid A, a ubiquitin-activating enzyme (E1) inhibitor. First, himA, together with the trans-enoyl reductase himH, catalyzes the formation of apolyketide chain, which is then condensed with leucine by the NRPS activity of himA. Dieckmann cyclization and release from himA gives a tetramic acid intermediate as the product of himA PKS-NRPS. HimG then catalyzes alpha-oxidation of the tetramic acid ring, with a subsequent rearrangement to yield apyrone intermediate. Two terminal methyl groups of polyketide and amide side chains are oxidized to carboxylic acids by himC cytochrome P450 monooxygenase to form himeic acid A. Himeic acid A is further converted to himeic acid B and C during culture growth. No gene responsible for pyrone to pyridone conversion was found in the him gene cluster and himeic acid A is non-enzymatically converted to himeic acid C by the incorporation of an ammonium nitrogen atom in a pH5 buffer, and to himeic acid B at a conversion ratio of 50% during incubation in MeOH for 5 days. This Aspergillus japonicus protein is NmrA-like family domain-containing oxidoreductase himF.